The primary structure comprises 189 residues: Putative ankyrin repeat protein TV1425 (189 aa).

4 ANK repeats span residues 31 to 60 (YNRT…KLED), 64 to 93 (EGST…NVNT), 97 to 126 (SGKT…NVND), and 130 to 159 (EGET…DISA).

This is Putative ankyrin repeat protein TV1425 from Thermoplasma volcanium (strain ATCC 51530 / DSM 4299 / JCM 9571 / NBRC 15438 / GSS1).